The following is a 440-amino-acid chain: MVHGYKGVKFQNWARTYGCCPEMYFQPTSVEEVREVLALARQQNKRVKVVGGGHSPSDIACTDGFMIHMGKMNRVLKVDTEKKQVTVEAGILLADLHPQLDKHGLALSNLGAVSDVTAGGVIGSGTHNTGIKHGILATQVVALTLLTANGTILECSESSNAEVFQAARVHLGCLGVILTVTLQCVPQFHLQETTFPSTLKEVLDNLDSHLKKSEYFRFLWFPHSENVSVIYQDHTNKPPSSSANWFWDYAIGFYLLEFLLWISTFLPGLVGWINRFFFWLLFNGKKENCNLSHKIFTYECRFKQHVQDWAIPREKTKEALLELKAMLEANPKVVAHYPVEVRFTRGDDILLSPCFQRDSCYMNIIMYRPYGKDVPRLDYWLAYETIMKKVGGRPHWAKAHNCTRKDFEKMYPAFQRFCAIREKLDPTGMFLNAYLEKVFY.

One can recognise an FAD-binding PCMH-type domain in the interval 17 to 187 (YGCCPEMYFQ…LTVTLQCVPQ (171 aa)). The residue at position 54 (His-54) is a Pros-8alpha-FAD histidine. A helical transmembrane segment spans residues 253–273 (FYLLEFLLWISTFLPGLVGWI).

This sequence belongs to the oxygen-dependent FAD-linked oxidoreductase family. Requires FAD as cofactor.

Its subcellular location is the microsome membrane. The protein localises to the endoplasmic reticulum membrane. The catalysed reaction is L-gulono-1,4-lactone + O2 = L-ascorbate + H2O2 + H(+). It participates in cofactor biosynthesis; L-ascorbate biosynthesis via UDP-alpha-D-glucuronate pathway; L-ascorbate from UDP-alpha-D-glucuronate: step 4/4. Functionally, oxidizes L-gulono-1,4-lactone to hydrogen peroxide and L-xylo-hexulonolactone which spontaneously isomerizes to L-ascorbate. This is L-gulonolactone oxidase (GULO) from Bos taurus (Bovine).